We begin with the raw amino-acid sequence, 195 residues long: Small ribosomal subunit protein uS4 (195 aa).

One can recognise an S4 RNA-binding domain in the interval 92–152 (SRLDNIVYRL…EKHKHKANKN (61 aa)).

This sequence belongs to the universal ribosomal protein uS4 family. As to quaternary structure, part of the 30S ribosomal subunit. Contacts protein S5. The interaction surface between S4 and S5 is involved in control of translational fidelity.

Functionally, one of the primary rRNA binding proteins, it binds directly to 16S rRNA where it nucleates assembly of the body of the 30S subunit. In terms of biological role, with S5 and S12 plays an important role in translational accuracy. This Karelsulcia muelleri (strain GWSS) (Sulcia muelleri) protein is Small ribosomal subunit protein uS4.